A 106-amino-acid chain; its full sequence is UPF0145 protein CKL_2433 (106 aa).

Belongs to the UPF0145 family.

This chain is UPF0145 protein CKL_2433, found in Clostridium kluyveri (strain ATCC 8527 / DSM 555 / NBRC 12016 / NCIMB 10680 / K1).